Consider the following 313-residue polypeptide: MVIMSASWSSHAFQPVLERIADEIERTPGRGRPADYIPALAACDPRRFGMAVAELDGTVYGVGDWRQPFSTQSITKVFTLALDLAREGDALWEHVGREPSGNPFNSLVQLEYESGIPRNPFINAGALVVTDRLQTQTGDAAGSLLEFLRAESGNPRLTFDQDVAASEAAHGDRNAALGHFMASYGNIDNSVPVLLDQYFRQCSIEASCADLALATGFLARHGIRADGSRLLTQSQAKQVNAVMLTCGTYDAAGDFAYRVGLPGKSGVGGGIIAVVPGRCTLCVWSPGLDERGNSVAGVAALDRFTTLTGVSVF.

7 residues coordinate substrate: Ser-73, Asn-123, Glu-167, Asn-174, Tyr-198, Tyr-249, and Val-267.

The protein belongs to the glutaminase family. Homotetramer.

It catalyses the reaction L-glutamine + H2O = L-glutamate + NH4(+). This chain is Glutaminase, found in Streptomyces avermitilis (strain ATCC 31267 / DSM 46492 / JCM 5070 / NBRC 14893 / NCIMB 12804 / NRRL 8165 / MA-4680).